A 425-amino-acid chain; its full sequence is Stabilizer of axonemal microtubules 4 (425 aa).

Disordered regions lie at residues 93 to 126, 203 to 225, and 316 to 335; these read PLEV…PPTK, EGSG…SQAL, and KEPT…PCDP. Residues 207 to 222 are compositionally biased toward polar residues; sequence FTKQSHQSPIVFQPPS.

As to quaternary structure, microtubule inner protein component of sperm flagellar doublet microtubules. Interacts with PPP1CA.

It is found in the cell projection. The protein localises to the cilium. Its subcellular location is the cytoplasm. It localises to the cytoskeleton. The protein resides in the flagellum axoneme. In Homo sapiens (Human), this protein is Stabilizer of axonemal microtubules 4.